Reading from the N-terminus, the 1070-residue chain is DNA-directed RNA polymerase subunit beta (1070 aa).

The protein belongs to the RNA polymerase beta chain family. As to quaternary structure, in plastids the minimal PEP RNA polymerase catalytic core is composed of four subunits: alpha, beta, beta', and beta''. When a (nuclear-encoded) sigma factor is associated with the core the holoenzyme is formed, which can initiate transcription.

It is found in the plastid. It localises to the chloroplast. It catalyses the reaction RNA(n) + a ribonucleoside 5'-triphosphate = RNA(n+1) + diphosphate. Functionally, DNA-dependent RNA polymerase catalyzes the transcription of DNA into RNA using the four ribonucleoside triphosphates as substrates. The protein is DNA-directed RNA polymerase subunit beta of Gossypium hirsutum (Upland cotton).